The sequence spans 86 residues: uncharacterized protein (86 aa).

The first 22 residues, 1–22, serve as a signal peptide directing secretion; sequence MKTINTVVAAMALSTLSFGVFA.

It belongs to the BhsA/McbA family.

Its subcellular location is the periplasm. This is an uncharacterized protein from Escherichia coli O6:H1 (strain CFT073 / ATCC 700928 / UPEC).